An 802-amino-acid polypeptide reads, in one-letter code: LPS-assembly protein LptD (802 aa).

An N-terminal signal peptide occupies residues 1 to 29 (MARLFSLKPLVLALGFCFGTHCAAADAVA).

It belongs to the LptD family. Component of the lipopolysaccharide transport and assembly complex. Interacts with LptE and LptA.

The protein localises to the cell outer membrane. Together with LptE, is involved in the assembly of lipopolysaccharide (LPS) at the surface of the outer membrane. In Neisseria meningitidis serogroup A / serotype 4A (strain DSM 15465 / Z2491), this protein is LPS-assembly protein LptD.